We begin with the raw amino-acid sequence, 61 residues long: Large ribosomal subunit protein bL32 (61 aa).

Over residues 1-16 (MAVPKRKTSPSKRGMR) the composition is skewed to basic residues. The interval 1–33 (MAVPKRKTSPSKRGMRRSADGLKAPTYVEDKNS) is disordered.

The protein belongs to the bacterial ribosomal protein bL32 family.

The polypeptide is Large ribosomal subunit protein bL32 (Allorhizobium ampelinum (strain ATCC BAA-846 / DSM 112012 / S4) (Agrobacterium vitis (strain S4))).